The following is a 257-amino-acid chain: uncharacterized protein (257 aa).

Residues 6–26 (IFWLNLAAIIIISIVVSGGMF) traverse the membrane as a helical segment.

It belongs to the staphylococcal tandem lipoprotein family.

It localises to the cell membrane. This is an uncharacterized protein from Staphylococcus aureus (strain Mu50 / ATCC 700699).